A 113-amino-acid chain; its full sequence is Sensorin-A (113 aa).

Residues 1–32 (MPSRAATSPLNVQMMVVLCIVCLALQAVAANA) form the signal peptide. Phenylalanine 54 is modified (phenylalanine amide). Positions 58–113 (SSSETYSTNLINLLSRQLVSQEELRAILEKQPILLDEVVKILDRNDDGYITVADLL) are excised as a propeptide. Positions 87–113 (KQPILLDEVVKILDRNDDGYITVADLL) constitute an EF-hand domain. Positions 100, 102, 104, 106, and 111 each coordinate Ca(2+).

As to expression, seems to be specific to the mechanosensory neurons of the central nervous system.

Its subcellular location is the secreted. May function as an inhibitory cotransmitter acting in conjunction with the fast excitatory transmitter released by sensory neurons. The peptide selectively inhibits certain postsynaptic cells probably by means of sensorin A release. The polypeptide is Sensorin-A (PSC1) (Aplysia californica (California sea hare)).